The primary structure comprises 516 residues: GMP synthase [glutamine-hydrolyzing] (516 aa).

Positions 6-198 constitute a Glutamine amidotransferase type-1 domain; sequence KVIIVDYGSQ…LFKIAGIKAD (193 aa). Catalysis depends on Cys83, which acts as the Nucleophile. Residues His172 and Glu174 contribute to the active site. One can recognise a GMPS ATP-PPase domain in the interval 199–391; the sequence is WSMSSFCERV…LGLPDFIVWR (193 aa). Residue 227–233 coordinates ATP; it reads SGGIDST.

Homodimer.

The enzyme catalyses XMP + L-glutamine + ATP + H2O = GMP + L-glutamate + AMP + diphosphate + 2 H(+). The protein operates within purine metabolism; GMP biosynthesis; GMP from XMP (L-Gln route): step 1/1. Its function is as follows. Catalyzes the synthesis of GMP from XMP. This chain is GMP synthase [glutamine-hydrolyzing], found in Oleidesulfovibrio alaskensis (strain ATCC BAA-1058 / DSM 17464 / G20) (Desulfovibrio alaskensis).